Here is a 226-residue protein sequence, read N- to C-terminus: Putative integrase V10 (226 aa).

Active-site residues include Arg97, His174, and Arg177. Tyr210 acts as the O-(3'-phospho-DNA)-tyrosine intermediate in catalysis.

Belongs to the 'phage' integrase family.

Its function is as follows. May catalyze site-specific integration of viral genome into host or helper virus DNA. In Acanthamoeba polyphaga (Amoeba), this protein is Putative integrase V10.